A 656-amino-acid chain; its full sequence is Putative cysteine-rich receptor-like protein kinase 32 (656 aa).

Residues 1 to 23 (MCLQNLLSILCFVLAISFGYVSA) form the signal peptide. Gnk2-homologous domains lie at 24–126 (QKCV…NSSF) and 134–238 (PTMV…GSEY). The Extracellular portion of the chain corresponds to 24 to 262 (QKCVDSMFFR…PDGKTISTGA (239 aa)). Asparagine 35, asparagine 52, asparagine 61, asparagine 103, and asparagine 123 each carry an N-linked (GlcNAc...) asparagine glycan. Residues 263 to 283 (IVAVVVSVVIFVVLLALVLVI) form a helical membrane-spanning segment. The Cytoplasmic portion of the chain corresponds to 284 to 656 (RKRRQSYKTL…SASITRVTPR (373 aa)). Residues 321–606 (FSRNNKLGKG…IFQMLTNSSI (286 aa)) form the Protein kinase domain. Residues 327 to 335 (LGKGGFGEV) and lysine 349 each bind ATP. Position 394 is a phosphotyrosine (tyrosine 394). Aspartate 454 (proton acceptor) is an active-site residue. Serine 458 carries the post-translational modification Phosphoserine. Threonine 494 carries the phosphothreonine modification. Tyrosine 502 is subject to Phosphotyrosine.

This sequence belongs to the protein kinase superfamily. Ser/Thr protein kinase family. CRK subfamily.

It is found in the membrane. It carries out the reaction L-seryl-[protein] + ATP = O-phospho-L-seryl-[protein] + ADP + H(+). It catalyses the reaction L-threonyl-[protein] + ATP = O-phospho-L-threonyl-[protein] + ADP + H(+). In Arabidopsis thaliana (Mouse-ear cress), this protein is Putative cysteine-rich receptor-like protein kinase 32 (CRK32).